The primary structure comprises 175 residues: Small ribosomal subunit protein uS7 (175 aa).

It belongs to the universal ribosomal protein uS7 family. As to quaternary structure, part of the 30S ribosomal subunit. Contacts proteins S9 and S11.

In terms of biological role, one of the primary rRNA binding proteins, it binds directly to 16S rRNA where it nucleates assembly of the head domain of the 30S subunit. Is located at the subunit interface close to the decoding center, probably blocks exit of the E-site tRNA. This is Small ribosomal subunit protein uS7 from Neorickettsia sennetsu (strain ATCC VR-367 / Miyayama) (Ehrlichia sennetsu).